We begin with the raw amino-acid sequence, 462 residues long: tRNA modification GTPase MnmE (462 aa).

(6S)-5-formyl-5,6,7,8-tetrahydrofolate-binding residues include R27, E89, and R128. Residues 223-383 enclose the TrmE-type G domain; the sequence is GLKIAIVGRP…LEAAILAAVG (161 aa). N233 serves as a coordination point for K(+). GTP is bound by residues 233–238, 252–258, and 277–280; these read NVGKSS, TDLPGTT, and DTAG. Residue S237 participates in Mg(2+) binding. K(+) is bound by residues T252, L254, and T257. T258 is a Mg(2+) binding site. K462 serves as a coordination point for (6S)-5-formyl-5,6,7,8-tetrahydrofolate.

This sequence belongs to the TRAFAC class TrmE-Era-EngA-EngB-Septin-like GTPase superfamily. TrmE GTPase family. In terms of assembly, homodimer. Heterotetramer of two MnmE and two MnmG subunits. The cofactor is K(+).

It localises to the cytoplasm. Exhibits a very high intrinsic GTPase hydrolysis rate. Involved in the addition of a carboxymethylaminomethyl (cmnm) group at the wobble position (U34) of certain tRNAs, forming tRNA-cmnm(5)s(2)U34. The polypeptide is tRNA modification GTPase MnmE (Synechococcus elongatus (strain ATCC 33912 / PCC 7942 / FACHB-805) (Anacystis nidulans R2)).